Reading from the N-terminus, the 194-residue chain is FMN-dependent NADH:quinone oxidoreductase (194 aa).

FMN contacts are provided by residues serine 10 and 90-93 (MYNL).

It belongs to the azoreductase type 1 family. Homodimer. It depends on FMN as a cofactor.

The enzyme catalyses 2 a quinone + NADH + H(+) = 2 a 1,4-benzosemiquinone + NAD(+). The catalysed reaction is N,N-dimethyl-1,4-phenylenediamine + anthranilate + 2 NAD(+) = 2-(4-dimethylaminophenyl)diazenylbenzoate + 2 NADH + 2 H(+). In terms of biological role, quinone reductase that provides resistance to thiol-specific stress caused by electrophilic quinones. Also exhibits azoreductase activity. Catalyzes the reductive cleavage of the azo bond in aromatic azo compounds to the corresponding amines. This chain is FMN-dependent NADH:quinone oxidoreductase, found in Haemophilus influenzae (strain 86-028NP).